The primary structure comprises 467 residues: Ribulose bisphosphate carboxylase large chain (467 aa).

Lys-5 is subject to N6,N6,N6-trimethyllysine. Substrate-binding residues include Asn-114 and Thr-164. Lys-166 (proton acceptor) is an active-site residue. Position 168 (Lys-168) interacts with substrate. Mg(2+)-binding residues include Lys-192, Asp-194, and Glu-195. Lys-192 carries the post-translational modification N6-carboxylysine. The Proton acceptor role is filled by His-285. Residues Arg-286, His-318, and Ser-370 each contribute to the substrate site.

It belongs to the RuBisCO large chain family. Type I subfamily. In terms of assembly, heterohexadecamer of 8 large chains and 8 small chains; disulfide-linked. The disulfide link is formed within the large subunit homodimers. The cofactor is Mg(2+). In terms of processing, the disulfide bond which can form in the large chain dimeric partners within the hexadecamer appears to be associated with oxidative stress and protein turnover.

It is found in the plastid. The protein resides in the chloroplast. It carries out the reaction 2 (2R)-3-phosphoglycerate + 2 H(+) = D-ribulose 1,5-bisphosphate + CO2 + H2O. It catalyses the reaction D-ribulose 1,5-bisphosphate + O2 = 2-phosphoglycolate + (2R)-3-phosphoglycerate + 2 H(+). In terms of biological role, ruBisCO catalyzes two reactions: the carboxylation of D-ribulose 1,5-bisphosphate, the primary event in carbon dioxide fixation, as well as the oxidative fragmentation of the pentose substrate in the photorespiration process. Both reactions occur simultaneously and in competition at the same active site. The chain is Ribulose bisphosphate carboxylase large chain from Tasmannia insipida (Pepperbush).